Reading from the N-terminus, the 312-residue chain is HPr kinase/phosphorylase (312 aa).

Active-site residues include His-139 and Lys-160. 154–161 (GSSGVGKS) is an ATP binding site. Residue Ser-161 coordinates Mg(2+). Catalysis depends on Asp-178, which acts as the Proton acceptor; for phosphorylation activity. Proton donor; for dephosphorylation activity. The interval 202–211 (LEIRGLGIIN) is important for the catalytic mechanism of both phosphorylation and dephosphorylation. A Mg(2+)-binding site is contributed by Glu-203. The active site involves Arg-244. The important for the catalytic mechanism of dephosphorylation stretch occupies residues 265 to 270 (PVRPGR).

It belongs to the HPrK/P family. As to quaternary structure, homohexamer. Mg(2+) serves as cofactor.

It carries out the reaction [HPr protein]-L-serine + ATP = [HPr protein]-O-phospho-L-serine + ADP + H(+). The enzyme catalyses [HPr protein]-O-phospho-L-serine + phosphate + H(+) = [HPr protein]-L-serine + diphosphate. Functionally, catalyzes the ATP- as well as the pyrophosphate-dependent phosphorylation of a specific serine residue in HPr, a phosphocarrier protein of the phosphoenolpyruvate-dependent sugar phosphotransferase system (PTS). HprK/P also catalyzes the pyrophosphate-producing, inorganic phosphate-dependent dephosphorylation (phosphorolysis) of seryl-phosphorylated HPr (P-Ser-HPr). The two antagonistic activities of HprK/P are regulated by several intracellular metabolites, which change their concentration in response to the absence or presence of rapidly metabolisable carbon sources (glucose, fructose, etc.) in the growth medium. Therefore, by controlling the phosphorylation state of HPr, HPrK/P is a sensor enzyme that plays a major role in the regulation of carbon metabolism and sugar transport: it mediates carbon catabolite repression (CCR), and regulates PTS-catalyzed carbohydrate uptake and inducer exclusion. This Listeria innocua serovar 6a (strain ATCC BAA-680 / CLIP 11262) protein is HPr kinase/phosphorylase.